Here is a 137-residue protein sequence, read N- to C-terminus: Basic phospholipase A2 beta-bungarotoxin A1 chain (137 aa).

An N-terminal signal peptide occupies residues 1-9 (AVCVSLLGA). Residues 10-17 (ANIPPHPL) constitute a propeptide that is removed on maturation. 6 cysteine pairs are disulfide-bonded: Cys-44–Cys-136, Cys-46–Cys-62, Cys-61–Cys-117, Cys-68–Cys-110, Cys-78–Cys-103, and Cys-96–Cys-108. Positions 45, 47, and 49 each coordinate Ca(2+). The active site involves His-65. Asp-66 is a binding site for Ca(2+). Asp-111 is an active-site residue.

The protein belongs to the phospholipase A2 family. Group I subfamily. D49 sub-subfamily. In terms of assembly, heterodimer; disulfide-linked. The A chain has phospholipase A2 activity and the B chain shows homology with the basic protease inhibitors. Ca(2+) is required as a cofactor. In terms of tissue distribution, expressed by the venom gland.

The protein resides in the secreted. The catalysed reaction is a 1,2-diacyl-sn-glycero-3-phosphocholine + H2O = a 1-acyl-sn-glycero-3-phosphocholine + a fatty acid + H(+). Snake venom phospholipase A2 (PLA2) that shows presynaptic neurotoxicity. The A chain has phospholipase activity. PLA2 catalyzes the calcium-dependent hydrolysis of the 2-acyl groups in 3-sn-phosphoglycerides. The protein is Basic phospholipase A2 beta-bungarotoxin A1 chain of Bungarus candidus (Malayan krait).